A 155-amino-acid polypeptide reads, in one-letter code: SsrA-binding protein (155 aa).

It belongs to the SmpB family.

It is found in the cytoplasm. Required for rescue of stalled ribosomes mediated by trans-translation. Binds to transfer-messenger RNA (tmRNA), required for stable association of tmRNA with ribosomes. tmRNA and SmpB together mimic tRNA shape, replacing the anticodon stem-loop with SmpB. tmRNA is encoded by the ssrA gene; the 2 termini fold to resemble tRNA(Ala) and it encodes a 'tag peptide', a short internal open reading frame. During trans-translation Ala-aminoacylated tmRNA acts like a tRNA, entering the A-site of stalled ribosomes, displacing the stalled mRNA. The ribosome then switches to translate the ORF on the tmRNA; the nascent peptide is terminated with the 'tag peptide' encoded by the tmRNA and targeted for degradation. The ribosome is freed to recommence translation, which seems to be the essential function of trans-translation. This chain is SsrA-binding protein, found in Streptococcus uberis (strain ATCC BAA-854 / 0140J).